The sequence spans 874 residues: Probable RNA-directed RNA polymerase (874 aa).

It belongs to the totiviridae RNA-directed RNA polymerase family.

It carries out the reaction RNA(n) + a ribonucleoside 5'-triphosphate = RNA(n+1) + diphosphate. Its function is as follows. RNA-dependent RNA polymerase which replicates the viral genome. Catalyzes the transcription of fully conservative plus-strand genomic RNAs that are extruded from the virion into the cytoplasm where they function as mRNAs for translation of viral proteins and also as substrates for encapsidation to form new virions. Once encapsidated, the positive strand is converted to dsRNA by the RNA-directed RNA polymerase. Displays ssRNA-binding activity. The chain is Probable RNA-directed RNA polymerase (ORF3) from Leishmania major (LRV-1-1).